A 634-amino-acid chain; its full sequence is DNA-directed RNA polymerase subunit gamma (634 aa).

Zn(2+) is bound by residues cysteine 74, cysteine 76, cysteine 89, and cysteine 92. Residues aspartate 471, aspartate 473, and aspartate 475 each contribute to the Mg(2+) site.

This sequence belongs to the RNA polymerase beta' chain family. RpoC1 subfamily. In terms of assembly, in cyanobacteria the RNAP catalytic core is composed of 2 alpha, 1 beta, 1 beta', 1 gamma and 1 omega subunit. When a sigma factor is associated with the core the holoenzyme is formed, which can initiate transcription. Mg(2+) serves as cofactor. It depends on Zn(2+) as a cofactor.

The catalysed reaction is RNA(n) + a ribonucleoside 5'-triphosphate = RNA(n+1) + diphosphate. Its function is as follows. DNA-dependent RNA polymerase catalyzes the transcription of DNA into RNA using the four ribonucleoside triphosphates as substrates. The polypeptide is DNA-directed RNA polymerase subunit gamma (Synechococcus sp. (strain CC9311)).